The primary structure comprises 3391 residues: MNNQRKKAKNTPFNMLKRERNRVSTVQQLTKRFSLGMLQGRGPLKLFMALVAFLRFLTIPPTAGILKRWGTIKKSKAINVLRGFRKEIGRMLNILNRRRRSAGMIIMLIPTVMAFHLTTRNGEPHMIVSRQEKGKSLLFKTEDGVNMCTLMAMDLGELCEDTITYKCPLLRQNEPEDIDCWCNSTSTWVTYGTCTTTGEHRREKRSVALVPHVGMGLETRTETWMSSEGAWKHAQRIETWILRHPGFTIMAAILAYTIGTTHFQRALIFILLTAVAPSMTMRCIGISNRDFVEGVSGGSWVDIVLEHGSCVTTMAKNKPTLDFELIKTEAKQPATLRKYCIEAKLTNTTTESRCPTQGEPSLNEEQDKRFVCKHSMVDRGWGNGCGLFGKGGIVTCAMFTCKKNMEGKIVQPENLEYTIVVTPHSGEEHAVGNDTGKHGKEIKVTPQSSITEAELTGYGTVTMECSPRTGLDFNEMVLLQMENKAWLVHRQWFLDLPLPWLPGADTQGSNWIQKETLVTFKNPHAKKQDVVVLGSQEGAMHTALTGATEIQMSSGNLLFTGHLKCRLRMDKLQLKGMSYSMCTGKFKVVKEIAETQHGTIVIRVQYEGDGSPCKIPFEIMDLEKRHVLGRLITVNPIVTEKDSPVNIEAEPPFGDSYIIIGVEPGQLKLNWFKKGSSIGQMFETTMRGAKRMAILGDTAWDFGSLGGVFTSIGKALHQVFGAIYGAAFSGVSWTMKILIGVIITWIGMNSRSTSLSVSLVLVGIVTLYLGVMVQADSGCVVSWKNKELKCGSGIFITDNVHTWTEQYKFQPESPSKLASAIQKAQEEGICGIRSVTRLENLMWKQITPELNHILAENEVKLTIMTGDIKGIMQAGKRSLRPQPTELKYSWKTWGKAKMLSTESHNQTFLIDGPETAECPNTNRAWNSLEVEDYGFGVFTTNIWLKLKEKQDAFCDSKLMSAAIKDNRAVHADMGYWIESALNDTWKIEKASFIEVKNCHWPKSHTLWSNGVLESEMIIPKNLAGPVSQHNYRPGYHTQIAGPWHLGKLEMDFDFCDGTTVVVTEDCGNRGPSLRTTTASGKLITEWCCRSCTLPPLRYRGEDGCWYGMEIRPLKEKEENLVNSLVTAGHGQVDNFSLGVLGMALFLEEMLRTRVGTKHAILLVAVSFVTLITGNMSFKDLGRVVVMVGATMTDDIGMGVTYLALLAAFKVRPTFAAGLLLRKLTSKELMMTTIGIVLLSQSTIPETILELTDALALGMMVLKMVRNMEKYQLAVTIMAILCVPNAVILQNAWKVSCTILAVVSVSPLLLTSSQQKTDWIPLALTIKGLNPTAIFLTTLSRTSKKRSWPLNEAIMAVGMVSILASSLLKNDIPMTGPLVAGGLLTVCYVLTGRSADLELERAADVKWEDQAEISGSSPILSITISEDGSMSIKNEEEEQTLTILIRTGLLVISGLFPVSIPITAAAWYLWEVKKQRAGVLWDVPSPPPMGKAELEDGAYRIKQKGILGYSQIGAGVYKEGTFHTMWHVTRGAVLMHKGKRIEPSWADVKKDLISYGGGWKLEGEWKEGEEVQVLALEPGKNPRAVQTKPGLFKTNAGTIGAVSLDFSPGTSGSPIIDKKGKVVGLYGNGVVTRSGAYVSAIAQTEKSIEDNPEIEDDIFRKRRLTIMDLHPGAGKTKRYLPAIVREAIKRGLRTLILAPTRVVAAEMEEALRGLPIRYQTPAIRAEHTGREIVDLMCHATFTMRLLSPVRVPNYNLIIMDEAHFTDPASIAARGYISTRVEMGEAAGIFMTATPPGSRDPFPQSNAPIIDEEREIPERSWNSGHEWVTDFKGKTVWFVPSIKAGNDIAACLRKNGKKVIQLSRKTFDSEYVKTRTNDWDFVVTTDISEMGANFKAERVIDPRRCMKPVILTDGEERVILAGPMPVTHSSAAQRRGRIGRNPKNENDQYIYMGEPLENDEDCAHWKEAKMLLDNINTPEGIIPSMFEPEREKVDAIDGEYRLRGEARKTFVDLMRRGDLPVWLAYKVAAEGINYADRRWCFDGIKNNQILEENVEVEIWTKEGERKKLKPRWLDARIYSDPLALKEFKEFAAGRKSLTLNLITEMGRLPTFMTQKTRDALDNLAVLHTAEAGGRAYNHALSELPETLETLLLLTLLATVTGGIFLFLMSGRGIGKMTLGMCCIITASVLLWYAQIQPHWIAASIILEFFLIVLLIPEPEKQRTPQDNQLTYVVIAILTVVAATMANEMGFLEKTKKDLGLGSIATQQPESNILDIDLRPASAWTLYAVATTFVTPMLRHSIENSSVNVSLTAIANQATVLMGLGKGWPLSKMDIGVPLLAIGCYSQVNPITLTAALLLLVAHYAIIGPGLQAKATREAQKRAAAGIMKNPTVDGITVIDLDPIPYDPKFEKQLGQVMLLVLCVTQVLMMRTTWALCEALTLATGPISTLWEGNPGRFWNTTIAVSMANIFRGSYLAGAGLLFSIMKNTTNTRRGTGNIGETLGEKWKSRLNALGKSEFQIYKKSGIQEVDRTLAKEGIKRGETDHHAVSRGSAKLRWFVERNMVTPEGKVVDLGCGRGGWSYYCGGLKNVREVKGLTKGGPGHEEPIPMSTYGWNLVRLQSGVDVFFIPPEKCDTLLCDIGESSPSPTVEAGRTLRVLNLVENWLNNNTQFCIKVLNPYMPSVIEKMETLQRKYGGALVRNPLSRNSTHEMYWVSNASGNIVSSVNMISRMLINRFTMRHKKATYEPDVDLGSGTRNIGIESEIPNLDIIGKRIEKIKQEHETSWHYDQDHPYKTWAYHGSYETKQTGSASSMVNGVVRLLTKPWDVLPTVTQMAMTDTTPFGQQRVFKEKVDTRTQEPKEGTKKLMKITAEWLWKELGKKKTPRMCTREEFTRKVRSNAALGAIFTDENKWKSAREAVEDSRFWELVDKERNLHLEGKCETCVYNMMGKREKKLGEFGKAKGSRAIWYMWLGARFLEFEALGFLNEDHWFSRENSLSGVEGEGLHKLGYILRDVSKKEGGAMYADDTAGWDTRITLEDLKNEEMVTNHMEGEHKKLAEAIFKLTYQNKVVRVQRPTPRGTVMDIISRRDQRGSGQVGTYGLNTFTNMEAQLIRQMEGEGVFKNIQHLTVTEEIAVQNWLARVGRERLSRMAISGDDCVVKPLDDRFASALTALNDMGKIRKDIQQWEPSRGWNDWTQVPFCSHHFHELIMKDGRVLVVPCRNQDELIGRARISQGAGWSLRETACLGKSYAQMWSLMYFHRRDLRLAANAICSAVPSHWVPTSRTTWSIHAKHEWMTTEDMLTVWNRVWIQENPWMEDKTPVESWEEIPYLGKREDQWCGSLIGLTSRATWAKNIQAAINQVRSLIGNEEYTDYMPSMKRFRREEEEAGVLW.

Residues 1–15 (MNNQRKKAKNTPFNM) are interaction with host EXOC1. Residues 1-101 (MNNQRKKAKN…LNILNRRRRS (101 aa)) are Cytoplasmic-facing. Positions 37 to 72 (MLQGRGPLKLFMALVAFLRFLTIPPTAGILKRWGTI) are hydrophobic; homodimerization of capsid protein C. Positions 101–114 (SAGMIIMLIPTVMA) are cleaved as a propeptide — ER anchor for the capsid protein C, removed in mature form by serine protease NS3. The helical transmembrane segment at 102–122 (AGMIIMLIPTVMAFHLTTRNG) threads the bilayer. Residues 123–238 (EPHMIVSRQE…GAWKHAQRIE (116 aa)) are Extracellular-facing. A glycan (N-linked (GlcNAc...) asparagine; by host) is linked at Asn183. The helical transmembrane segment at 239 to 259 (TWILRHPGFTIMAAILAYTIG) threads the bilayer. Topologically, residues 260-265 (TTHFQR) are cytoplasmic. Residues 266 to 280 (ALIFILLTAVAPSMT) form a helical membrane-spanning segment. Residues 281–725 (MRCIGISNRD…LHQVFGAIYG (445 aa)) are Extracellular-facing. Intrachain disulfides connect Cys283/Cys310, Cys340/Cys401, Cys354/Cys385, and Cys372/Cys396. An N-linked (GlcNAc...) asparagine; by host glycan is attached at Asn347. Positions 378–391 (DRGWGNGCGLFGKG) are fusion peptide. A glycan (N-linked (GlcNAc...) asparagine; by host) is linked at Asn433. Disulfide bonds link Cys465–Cys565 and Cys582–Cys613. Residues 726-746 (AAFSGVSWTMKILIGVIITWI) form a helical membrane-spanning segment. At 747-752 (GMNSRS) the chain is on the cytoplasmic side. The helical transmembrane segment at 753 to 773 (TSLSVSLVLVGIVTLYLGVMV) threads the bilayer. Residues 774–1195 (QADSGCVVSW…MVGATMTDDI (422 aa)) lie on the Extracellular side of the membrane. 6 disulfides stabilise this stretch: Cys779-Cys790, Cys830-Cys918, Cys954-Cys998, Cys1055-Cys1104, Cys1066-Cys1088, and Cys1087-Cys1091. Residues Asn905 and Asn982 are each glycosylated (N-linked (GlcNAc...) asparagine; by host). Asn1134 is a glycosylation site (N-linked (GlcNAc...) asparagine; by host). Residues 1196–1220 (GMGVTYLALLAAFKVRPTFAAGLLL) form a helical membrane-spanning segment. The Cytoplasmic portion of the chain corresponds to 1221 to 1226 (RKLTSK). A helical transmembrane segment spans residues 1227–1245 (ELMMTTIGIVLLSQSTIPE). Residues 1246 to 1269 (TILELTDALALGMMVLKMVRNMEK) are Lumenal-facing. The helical transmembrane segment at 1270-1290 (YQLAVTIMAILCVPNAVILQN) threads the bilayer. A topological domain (cytoplasmic) is located at residue Ala1291. A helical membrane pass occupies residues 1292 to 1310 (WKVSCTILAVVSVSPLLLT). Over 1311–1317 (SSQQKTD) the chain is Lumenal. Residues 1318-1338 (WIPLALTIKGLNPTAIFLTTL) form a helical membrane-spanning segment. The Cytoplasmic portion of the chain corresponds to 1339–1346 (SRTSKKRS). Residues 1347–1367 (WPLNEAIMAVGMVSILASSLL) traverse the membrane as a helical segment. The Lumenal portion of the chain corresponds to 1368-1370 (KND). A helical membrane pass occupies residues 1371-1391 (IPMTGPLVAGGLLTVCYVLTG). At 1392-1447 (RSADLELERAADVKWEDQAEISGSSPILSITISEDGSMSIKNEEEEQTLTILIRTG) the chain is on the cytoplasmic side. An interacts with and activates NS3 protease region spans residues 1398–1437 (LERAADVKWEDQAEISGSSPILSITISEDGSMSIKNEEEE). The segment at residues 1448–1468 (LLVISGLFPVSIPITAAAWYL) is an intramembrane region (helical). Over 1469–2147 (WEVKKQRAGV…LSELPETLET (679 aa)) the chain is Cytoplasmic. The region spanning 1476 to 1653 (AGVLWDVPSP…EKSIEDNPEI (178 aa)) is the Peptidase S7 domain. Active-site charge relay system; for serine protease NS3 activity residues include His1526, Asp1550, and Ser1610. A Helicase ATP-binding domain is found at 1655–1811 (DDIFRKRRLT…QSNAPIIDEE (157 aa)). Residues 1659–1662 (RKRR) are important for RNA-binding. Residue 1668–1675 (LHPGAGKT) coordinates ATP. Residues 1759–1762 (DEAH) carry the DEAH box motif. The Helicase C-terminal domain maps to 1821-1988 (SGHEWVTDFK…IIPSMFEPER (168 aa)). Lys1863 carries the N6-acetyllysine; by host modification. A helical membrane pass occupies residues 2148 to 2168 (LLLLTLLATVTGGIFLFLMSG). Residues 2169 to 2170 (RG) are Lumenal-facing. Positions 2171–2191 (IGKMTLGMCCIITASVLLWYA) form an intramembrane region, helical. Gln2192 is a topological domain (lumenal). The chain crosses the membrane as a helical span at residues 2193–2213 (IQPHWIAASIILEFFLIVLLI). At 2214–2228 (PEPEKQRTPQDNQLT) the chain is on the cytoplasmic side. A helical transmembrane segment spans residues 2229–2249 (YVVIAILTVVAATMANEMGFL). The Lumenal segment spans residues 2250–2274 (EKTKKDLGLGSIATQQPESNILDID). An intramembrane region (helical) is located at residues 2275 to 2295 (LRPASAWTLYAVATTFVTPML). At 2296 to 2316 (RHSIENSSVNVSLTAIANQAT) the chain is on the lumenal side. N-linked (GlcNAc...) asparagine; by host glycosylation is found at Asn2301 and Asn2305. The helical intramembrane region spans 2317–2337 (VLMGLGKGWPLSKMDIGVPLL). Residues 2338-2347 (AIGCYSQVNP) are Lumenal-facing. The chain crosses the membrane as a helical span at residues 2348–2368 (ITLTAALLLLVAHYAIIGPGL). Residues 2369–2413 (QAKATREAQKRAAAGIMKNPTVDGITVIDLDPIPYDPKFEKQLGQ) are Cytoplasmic-facing. A helical transmembrane segment spans residues 2414 to 2434 (VMLLVLCVTQVLMMRTTWALC). Residues 2435–2459 (EALTLATGPISTLWEGNPGRFWNTT) lie on the Lumenal side of the membrane. N-linked (GlcNAc...) asparagine; by host glycosylation occurs at Asn2457. The chain crosses the membrane as a helical span at residues 2460–2480 (IAVSMANIFRGSYLAGAGLLF). Topologically, residues 2481 to 3391 (SIMKNTTNTR…REEEEAGVLW (911 aa)) are cytoplasmic. The 263-residue stretch at 2493 to 2755 (TGNIGETLGE…DVDLGSGTRN (263 aa)) folds into the mRNA cap 0-1 NS5-type MT domain. An S-adenosyl-L-methionine-binding site is contributed by Ser2547. Position 2547 is a phosphoserine (Ser2547). The active-site For 2'-O-MTase activity is the Lys2552. Residues 2568 to 2571 (VVDL) carry the SUMO-interacting motif motif. The S-adenosyl-L-methionine site is built by Gly2577, Trp2578, Thr2595, Lys2596, Asp2622, and Val2623. Catalysis depends on Asp2637, which acts as the For 2'-O-MTase activity. Ile2638 provides a ligand contact to S-adenosyl-L-methionine. Catalysis depends on for 2'-O-MTase activity residues Lys2672 and Glu2708. Position 2710 (Tyr2710) interacts with S-adenosyl-L-methionine. 4 residues coordinate Zn(2+): Glu2929, His2933, Cys2938, and Cys2941. One can recognise a RdRp catalytic domain in the interval 3020-3169 (AMYADDTAGW…PLDDRFASAL (150 aa)). 3 residues coordinate Zn(2+): His3203, Cys3219, and Cys3338.

In the N-terminal section; belongs to the class I-like SAM-binding methyltransferase superfamily. mRNA cap 0-1 NS5-type methyltransferase family. Homodimer. Interacts (via N-terminus) with host EXOC1 (via C-terminus); this interaction results in EXOC1 degradation through the proteasome degradation pathway. As to quaternary structure, forms heterodimers with envelope protein E in the endoplasmic reticulum and Golgi. In terms of assembly, homodimer; in the endoplasmic reticulum and Golgi. Interacts with protein prM. Interacts with non-structural protein 1. Homodimer; Homohexamer when secreted. Interacts with envelope protein E. Interacts with host PRKAA1. As to quaternary structure, interacts (via N-terminus) with serine protease NS3. In terms of assembly, forms a heterodimer with serine protease NS3. May form homooligomers. Forms a heterodimer with NS2B. Interacts with NS4B. Interacts with unphosphorylated RNA-directed RNA polymerase NS5; this interaction stimulates RNA-directed RNA polymerase NS5 guanylyltransferase activity. Interacts with host SHFL. As to quaternary structure, interacts with host MAVS; this interaction inhibits the synthesis of IFN-beta. Interacts with host SHFL. Interacts with host AUP1; the interaction occurs in the presence of Dengue virus NS4B and induces lipophagy which facilitates production of virus progeny particles. May interact with host SRPRA and SEC61G. In terms of assembly, interacts with serine protease NS3. Homodimer. Interacts with host STAT2; this interaction inhibits the phosphorylation of the latter, and, when all viral proteins are present (polyprotein), targets STAT2 for degradation. Interacts with serine protease NS3. Interacts with host PAF1 complex; the interaction may prevent the recruitment of the PAF1 complex to interferon-responsive genes, and thus reduces the immune response. Post-translationally, specific enzymatic cleavages in vivo yield mature proteins. Cleavages in the lumen of endoplasmic reticulum are performed by host signal peptidase, whereas cleavages in the cytoplasmic side are performed by serine protease NS3. Signal cleavage at the 2K-4B site requires a prior NS3 protease-mediated cleavage at the 4A-2K site. In terms of processing, cleaved in post-Golgi vesicles by a host furin, releasing the mature small envelope protein M, and peptide pr. This cleavage is incomplete as up to 30% of viral particles still carry uncleaved prM. N-glycosylated. Post-translationally, N-glycosylated. The excreted form is glycosylated and this is required for efficient secretion of the protein from infected cells. In terms of processing, acetylated by host KAT5. Acetylation modulates NS3 RNA-binding and unwinding activities and plays an important positive role for viral replication. Phosphorylated on serines residues. This phosphorylation may trigger NS5 nuclear localization. Post-translationally, sumoylation of RNA-directed RNA polymerase NS5 increases NS5 protein stability allowing proper viral RNA replication.

Its subcellular location is the virion. The protein resides in the host nucleus. The protein localises to the host cytoplasm. It is found in the host perinuclear region. It localises to the secreted. Its subcellular location is the virion membrane. The protein resides in the host endoplasmic reticulum membrane. The protein localises to the host mitochondrion. It catalyses the reaction Selective hydrolysis of -Xaa-Xaa-|-Yaa- bonds in which each of the Xaa can be either Arg or Lys and Yaa can be either Ser or Ala.. The enzyme catalyses RNA(n) + a ribonucleoside 5'-triphosphate = RNA(n+1) + diphosphate. The catalysed reaction is a ribonucleoside 5'-triphosphate + H2O = a ribonucleoside 5'-diphosphate + phosphate + H(+). It carries out the reaction ATP + H2O = ADP + phosphate + H(+). It catalyses the reaction a 5'-end (5'-triphosphoguanosine)-ribonucleoside in mRNA + S-adenosyl-L-methionine = a 5'-end (N(7)-methyl 5'-triphosphoguanosine)-ribonucleoside in mRNA + S-adenosyl-L-homocysteine. The enzyme catalyses a 5'-end (N(7)-methyl 5'-triphosphoguanosine)-ribonucleoside in mRNA + S-adenosyl-L-methionine = a 5'-end (N(7)-methyl 5'-triphosphoguanosine)-(2'-O-methyl-ribonucleoside) in mRNA + S-adenosyl-L-homocysteine + H(+). In terms of biological role, plays a role in virus budding by binding to the cell membrane and gathering the viral RNA into a nucleocapsid that forms the core of a mature virus particle. During virus entry, may induce genome penetration into the host cytoplasm after hemifusion induced by the surface proteins. Can migrate to the cell nucleus where it modulates host functions. Overcomes the anti-viral effects of host EXOC1 by sequestering and degrading the latter through the proteasome degradation pathway. Functionally, inhibits RNA silencing by interfering with host Dicer. Prevents premature fusion activity of envelope proteins in trans-Golgi by binding to envelope protein E at pH6.0. After virion release in extracellular space, gets dissociated from E dimers. Its function is as follows. Acts as a chaperone for envelope protein E during intracellular virion assembly by masking and inactivating envelope protein E fusion peptide. prM is the only viral peptide matured by host furin in the trans-Golgi network probably to avoid catastrophic activation of the viral fusion activity in acidic Golgi compartment prior to virion release. prM-E cleavage is inefficient, and many virions are only partially matured. These uncleaved prM would play a role in immune evasion. In terms of biological role, may play a role in virus budding. Exerts cytotoxic effects by activating a mitochondrial apoptotic pathway through M ectodomain. May display a viroporin activity. Functionally, binds to host cell surface receptor and mediates fusion between viral and cellular membranes. Envelope protein is synthesized in the endoplasmic reticulum in the form of heterodimer with protein prM. They play a role in virion budding in the ER, and the newly formed immature particle is covered with 60 spikes composed of heterodimer between precursor prM and envelope protein E. The virion is transported to the Golgi apparatus where the low pH causes dissociation of PrM-E heterodimers and formation of E homodimers. prM-E cleavage is inefficient, and many virions are only partially matured. These uncleaved prM would play a role in immune evasion. Involved in immune evasion, pathogenesis and viral replication. Once cleaved off the polyprotein, is targeted to three destinations: the viral replication cycle, the plasma membrane and the extracellular compartment. Essential for viral replication. Required for formation of the replication complex and recruitment of other non-structural proteins to the ER-derived membrane structures. Excreted as a hexameric lipoparticle that plays a role against host immune response. Antagonizing the complement function. Binds to the host macrophages and dendritic cells. Inhibits signal transduction originating from Toll-like receptor 3 (TLR3). Mediates complement activation, which may contribute to the pathogenesis of the vascular leakage that occurs in severe dengue disease. Activates autophagy through the AMPK/ERK/mTOR signaling pathway. Mechanistically, acts as the assembly platform for STK11-AMPK interactions and promotes STK11-AMPK interactions. In turn, promotes phosphorylation of the AMPK kinase structural domain and activates AMPK, thereby positively regulating the AMPK/ERK/mTOR signaling pathway and inducing autophagy. Its function is as follows. Disrupts the host endothelial glycocalyx layer of host pulmonary microvascular endothelial cells, inducing degradation of sialic acid and shedding of heparan sulfate proteoglycans. NS1 induces expression of sialidases, heparanase, and activates cathepsin L, which activates heparanase via enzymatic cleavage. These effects are probably linked to the endothelial hyperpermeability observed in severe dengue disease. In terms of biological role, component of the viral RNA replication complex that functions in virion assembly and antagonizes the host immune response. Functionally, required cofactor for the serine protease function of NS3. May have membrane-destabilizing activity and form viroporins. Displays three enzymatic activities: serine protease, NTPase and RNA helicase. NS3 serine protease, in association with NS2B, performs its autocleavage and cleaves the polyprotein at dibasic sites in the cytoplasm: C-prM, NS2A-NS2B, NS2B-NS3, NS3-NS4A, NS4A-2K and NS4B-NS5. NS3 RNA helicase binds RNA and unwinds dsRNA in the 3' to 5' direction. Its function is as follows. Regulates the ATPase activity of the NS3 helicase activity. NS4A allows NS3 helicase to conserve energy during unwinding. Plays a role in the inhibition of the host innate immune response. Interacts with host MAVS and thereby prevents the interaction between RIGI and MAVS. In turn, IFN-beta production is impaired. Interacts with host AUP1 which mediates induction of lipophagy in host cells and facilitates production of virus progeny particles. In terms of biological role, functions as a signal peptide for NS4B and is required for the interferon antagonism activity of the latter. Functionally, induces the formation of ER-derived membrane vesicles where the viral replication takes place. Inhibits interferon (IFN)-induced host STAT1 phosphorylation and nuclear translocation, thereby preventing the establishment of cellular antiviral state by blocking the IFN-alpha/beta pathway. Replicates the viral (+) and (-) RNA genome, and performs the capping of genomes in the cytoplasm. NS5 methylates viral RNA cap at guanine N-7 and ribose 2'-O positions. Besides its role in RNA genome replication, also prevents the establishment of cellular antiviral state by blocking the interferon-alpha/beta (IFN-alpha/beta) signaling pathway. Inhibits host TYK2 and STAT2 phosphorylation, thereby preventing activation of JAK-STAT signaling pathway. May reduce immune responses by preventing the recruitment of the host PAF1 complex to interferon-responsive genes. The sequence is that of Genome polyprotein from Aedimorphus (Red guenon).